The primary structure comprises 297 residues: Phosphoribosylaminoimidazole-succinocarboxamide synthase (297 aa).

The protein belongs to the SAICAR synthetase family.

It carries out the reaction 5-amino-1-(5-phospho-D-ribosyl)imidazole-4-carboxylate + L-aspartate + ATP = (2S)-2-[5-amino-1-(5-phospho-beta-D-ribosyl)imidazole-4-carboxamido]succinate + ADP + phosphate + 2 H(+). It functions in the pathway purine metabolism; IMP biosynthesis via de novo pathway; 5-amino-1-(5-phospho-D-ribosyl)imidazole-4-carboxamide from 5-amino-1-(5-phospho-D-ribosyl)imidazole-4-carboxylate: step 1/2. In Mycobacterium ulcerans (strain Agy99), this protein is Phosphoribosylaminoimidazole-succinocarboxamide synthase.